Reading from the N-terminus, the 356-residue chain is Non-functional pseudokinase ZRK15 (356 aa).

The Protein kinase domain occupies 62-356 (NRVSELFDEI…SSSSCGETSL (295 aa)). ATP contacts are provided by residues 68–76 (FDEIPYDWY) and Lys-94.

This sequence belongs to the protein kinase superfamily. Ser/Thr protein kinase family. ZRK subfamily. Interacts with RPP13L4/ZAR1.

This chain is Non-functional pseudokinase ZRK15, found in Arabidopsis thaliana (Mouse-ear cress).